The following is a 296-amino-acid chain: L-ornithine N(alpha)-acyltransferase (296 aa).

It belongs to the acetyltransferase family. OlsB subfamily.

The catalysed reaction is a (3R)-hydroxyacyl-[ACP] + L-ornithine = a lyso-ornithine lipid + holo-[ACP] + H(+). The protein operates within lipid metabolism. Catalyzes the first step in the biosynthesis of ornithine lipids, which are phosphorus-free membrane lipids. Catalyzes the 3-hydroxyacyl-acyl carrier protein-dependent acylation of ornithine to form lyso-ornithine lipid (LOL). The sequence is that of L-ornithine N(alpha)-acyltransferase from Rhizobium meliloti (strain 1021) (Ensifer meliloti).